The chain runs to 86 residues: Small ribosomal subunit protein uS17 (86 aa).

The protein belongs to the universal ribosomal protein uS17 family. In terms of assembly, part of the 30S ribosomal subunit.

Functionally, one of the primary rRNA binding proteins, it binds specifically to the 5'-end of 16S ribosomal RNA. The chain is Small ribosomal subunit protein uS17 from Lactococcus lactis subsp. cremoris (strain SK11).